The following is a 247-amino-acid chain: ATP synthase subunit a, chloroplastic (247 aa).

Transmembrane regions (helical) follow at residues 38–58 (QVLI…TLAV), 95–115 (VPFI…GALL), 134–154 (INTT…AGLS), 199–219 (LVVV…VMFL), and 220–240 (GLFT…AYIG).

This sequence belongs to the ATPase A chain family. In terms of assembly, F-type ATPases have 2 components, CF(1) - the catalytic core - and CF(0) - the membrane proton channel. CF(1) has five subunits: alpha(3), beta(3), gamma(1), delta(1), epsilon(1). CF(0) has four main subunits: a, b, b' and c.

The protein resides in the plastid. It is found in the chloroplast thylakoid membrane. Key component of the proton channel; it plays a direct role in the translocation of protons across the membrane. This is ATP synthase subunit a, chloroplastic from Lemna minor (Common duckweed).